The chain runs to 762 residues: MALAHSLGFPRIGRDRELKKAQEAFWKGELDEAGLRAVGRDLRKTHWELQKNAGIDLLPVGDFAWYDQVLTHSLMFGVIPRRFRPQHGPATLQTLFGMARGVSDGCCGGAHAQEMTKWFDTNYHYLVPEFGADQQFQLGWEQLFEEVEEARALGHAVKPVLIGPLTYLWLGKAKGAEFDKLELLDRLLPLYGQIFQRLAAQGVEWVQIDEPILVLDLPQDWKNAFERAYNQIQREPLKKLLATYFGGLEENLGLAANLPVDGLHIDLVRAPEQYPTILDRLPAYKVLSLGLVNGRNVWRCDLEKALATLQHAHERLGERLWVAPSCSLLHSPVDLDREDQLDAELKSWLAFAVQKCQEVAVLAQAVNQPQARAVLKALEQSRAVQASRAASPRIHKPAVQARVAAITTKDSQRRSAFTQRIAKQRAGLDLPLFPTTTIGSFPQTASIRLARQSFKQGKLSVAEYTEAMHSEIRHAVLVQERLGLDVLVHGEAERNDMVEYFAEQLDGYVFTRFGWVQSYGSRCVKPALIFGDLSRPNAMTVEWIRYAQGLTDKVMKGMLTGPVTMLMWSFPREDVSREVQARQLALAIRDEVLDLEAAGIRIVQIDEAAFREGLPLRRAQWQHYLDWATEVFRLCASGVRDETQIHTHMCYSEFNDVIESIAAMDADVITIETSRSDMELLDAFKAFAYPNEIGPGVYDIHSPRVPDASEMANLLRKAAQRIPAERLWVNPDCGLKTRGWPETEAALVHMVTAARQLRKELA.

5-methyltetrahydropteroyltri-L-glutamate-binding positions include 16 to 19 and lysine 117; that span reads RELK. L-homocysteine contacts are provided by residues 438–440 and glutamate 491; that span reads IGS. Residues 438 to 440 and glutamate 491 each bind L-methionine; that span reads IGS. Residues 522 to 523 and tryptophan 568 each bind 5-methyltetrahydropteroyltri-L-glutamate; that span reads RC. L-homocysteine is bound at residue aspartate 606. Aspartate 606 is an L-methionine binding site. Glutamate 612 contacts 5-methyltetrahydropteroyltri-L-glutamate. Positions 648, 650, and 672 each coordinate Zn(2+). The active-site Proton donor is the histidine 701. Position 733 (cysteine 733) interacts with Zn(2+).

It belongs to the vitamin-B12 independent methionine synthase family. Zn(2+) is required as a cofactor.

The catalysed reaction is 5-methyltetrahydropteroyltri-L-glutamate + L-homocysteine = tetrahydropteroyltri-L-glutamate + L-methionine. It participates in amino-acid biosynthesis; L-methionine biosynthesis via de novo pathway; L-methionine from L-homocysteine (MetE route): step 1/1. In terms of biological role, catalyzes the transfer of a methyl group from 5-methyltetrahydrofolate to homocysteine resulting in methionine formation. The sequence is that of 5-methyltetrahydropteroyltriglutamate--homocysteine methyltransferase from Pseudomonas fluorescens (strain ATCC BAA-477 / NRRL B-23932 / Pf-5).